A 625-amino-acid chain; its full sequence is MSQESDNNKRLVALVPMPSDPPFNTRRAYTSEDEAWKSYLENPLTAATKAMMSINGDEDSAAALGLLYDYYKVPRDKRLLSVSKASDSQEDQDKRNCLGTSEAQINLSGGENRVQVLKTVPVNLCLSQDHMENSKREQYSVSITESSAVIPVSGITVVKAEDFTPVFMAPPVHYPRADSEEQRVVIFEQTQYDLPSIASHSSYLKDDQRSTPDSTYSESFKDGASEKFRSTSVGADEYTYDQTGSGTFQYTLEATKSLRQKQGEGPMTYLNKGQFYAITLSETGDNKCFRHPISKVRSVVMVVFSEDKNRDEQLKYWKYWHSRQHTAKQRVLDIADYKESFNTIGNIEEIAYNAVSFTWDVNEEAKIFITVNCLSTDFSSQKGVKGLPLMIQIDTYSYNNRSNKPIHRAYCQIKVFCDKGAERKIRDEERKQNRKKGKGQASQAQCNNSSDGKMAAIPLQKKSDITYFKTMPDLHSQPVLFIPDVHFANLQRTGQVYYNTDDEREGSSVLVKRMFRPMEEEFGPTPSKQIKEENVKRVLLYVRKENDDVFDALMLKSPTVKGLMEALSEKYGLPVEKITKLYKKSKKGILVNMDDNIIEHYSNEDTFILNMESMVEGFKITLMEI.

Residues 1-93 (MSQESDNNKR…KASDSQEDQD (93 aa)) are transcription activation. Disordered regions lie at residues 198-222 (ASHS…SFKD) and 428-452 (EERK…SSDG). The Grh/CP2 DB domain maps to 244–482 (GSGTFQYTLE…DLHSQPVLFI (239 aa)). Residues 440 to 451 (QASQAQCNNSSD) show a composition bias toward polar residues.

The protein belongs to the grh/CP2 family. Grainyhead subfamily. In terms of assembly, homodimer, also forms heterodimers with GRHL1 or GRHL3.

The protein resides in the nucleus. It localises to the membrane. Transcription factor playing an important role in primary neurulation and in epithelial development. Binds directly to the consensus DNA sequence 5'-AACCGGTT-3' acting as an activator and repressor on distinct target genes. During embryogenesis, plays unique and cooperative roles with GRHL3 in establishing distinct zones of primary neurulation. Essential for closure 3 (rostral end of the forebrain), functions cooperatively with GRHL3 in closure 2 (forebrain/midbrain boundary) and posterior neuropore closure. Regulates epithelial morphogenesis acting as a target gene-associated transcriptional activator of apical junctional complex components. Up-regulates of CLDN3 and CLDN4, as well as of RAB25, which increases the CLDN4 protein and its localization at tight junctions. Comprises an essential component of the transcriptional machinery that establishes appropriate expression levels of CLDN4 and CDH1 in different types of epithelia. Exhibits functional redundancy with GRHL3 in epidermal morphogenetic events such as eyelid fusion and epidermal wound repair. In lung, forms a regulatory loop with NKX2-1 that coordinates lung epithelial cell morphogenesis and differentiation. In keratinocytes, plays a role in telomerase activation during cellular proliferation, regulates TERT expression by binding to TERT promoter region and inhibiting DNA methylation at the 5'-CpG island, possibly by interfering with DNMT1 enzyme activity. In addition, impairs keratinocyte differentiation and epidermal function by inhibiting the expression of genes clustered at the epidermal differentiation complex (EDC) as well as GRHL1 and GRHL3 through epigenetic mechanisms. The polypeptide is Grainyhead-like protein 2 homolog (Grhl2) (Mus musculus (Mouse)).